Here is a 320-residue protein sequence, read N- to C-terminus: Cytochrome f (320 aa).

The first 35 residues, 1-35 (MQTRNAFSWLKKQITRSISVSLMIYILTRTSISSA), serve as a signal peptide directing secretion. Residues Y36, C56, C59, and H60 each contribute to the heme site. A helical membrane pass occupies residues 286–306 (VQGLLFFLASVILAQIFLVLK).

It belongs to the cytochrome f family. The 4 large subunits of the cytochrome b6-f complex are cytochrome b6, subunit IV (17 kDa polypeptide, petD), cytochrome f and the Rieske protein, while the 4 small subunits are PetG, PetL, PetM and PetN. The complex functions as a dimer. Heme serves as cofactor.

It is found in the plastid. The protein localises to the chloroplast thylakoid membrane. Component of the cytochrome b6-f complex, which mediates electron transfer between photosystem II (PSII) and photosystem I (PSI), cyclic electron flow around PSI, and state transitions. The protein is Cytochrome f of Nicotiana sylvestris (Wood tobacco).